The following is a 196-amino-acid chain: Large ribosomal subunit protein bL25 (196 aa).

It belongs to the bacterial ribosomal protein bL25 family. CTC subfamily. Part of the 50S ribosomal subunit; part of the 5S rRNA/L5/L18/L25 subcomplex. Contacts the 5S rRNA. Binds to the 5S rRNA independently of L5 and L18.

In terms of biological role, this is one of the proteins that binds to the 5S RNA in the ribosome where it forms part of the central protuberance. The polypeptide is Large ribosomal subunit protein bL25 (Bacteroides fragilis (strain ATCC 25285 / DSM 2151 / CCUG 4856 / JCM 11019 / LMG 10263 / NCTC 9343 / Onslow / VPI 2553 / EN-2)).